The sequence spans 540 residues: Chaperonin GroEL (540 aa).

Residues 29 to 32, 86 to 90, Gly-413, 476 to 478, and Asp-492 each bind ATP; these read TIGP, DGTTT, and NAA.

It belongs to the chaperonin (HSP60) family. Forms a cylinder of 14 subunits composed of two heptameric rings stacked back-to-back. Interacts with the co-chaperonin GroES.

It localises to the cytoplasm. The catalysed reaction is ATP + H2O + a folded polypeptide = ADP + phosphate + an unfolded polypeptide.. In terms of biological role, together with its co-chaperonin GroES, plays an essential role in assisting protein folding. The GroEL-GroES system forms a nano-cage that allows encapsulation of the non-native substrate proteins and provides a physical environment optimized to promote and accelerate protein folding. This chain is Chaperonin GroEL, found in Staphylococcus saprophyticus subsp. saprophyticus (strain ATCC 15305 / DSM 20229 / NCIMB 8711 / NCTC 7292 / S-41).